Here is a 604-residue protein sequence, read N- to C-terminus: ATPase family AAA domain-containing protein 3A homolog (604 aa).

Residues 1–50 form a disordered region; the sequence is MSWLLGRNRQQPQPDQTAGFSEGGGAADPEGRTAGEKSGDSQLSRAERKA. The span at 8–19 shows a compositional bias: polar residues; it reads NRQQPQPDQTAG. The segment covering 29–50 has biased composition (basic and acidic residues); the sequence is PEGRTAGEKSGDSQLSRAERKA. The stretch at 62 to 221 forms a coiled coil; it reads ERAADAAKTL…INLEKIRLKA (160 aa). 358–365 contributes to the ATP binding site; that stretch reads GPPGTGKT.

Can form homooligomers.

The protein localises to the mitochondrion inner membrane. It localises to the mitochondrion matrix. It is found in the mitochondrion nucleoid. Required to maintain the proper number of mitochondria in neurons and muscles. The sequence is that of ATPase family AAA domain-containing protein 3A homolog from Drosophila melanogaster (Fruit fly).